Consider the following 175-residue polypeptide: Anterior gradient protein 2 homolog (175 aa).

Positions 1 to 20 are cleaved as a signal peptide; the sequence is MEKIPVSAFLLLVALSYTLA. Positions 21–40 are required to promote cell adhesion; sequence RDTTVKPGAKKDTKDSRPKL. 2 consecutive short sequence motifs (homodimer stabilization; interchain) follow at residues 45 to 54 and 60 to 67; these read SRGWGDQLIW and EALYKSKT.

This sequence belongs to the AGR family. Monomer and homodimer. Interacts with LYPD3 and DAG1 (alphaDAG1). Interacts with MUC2; disulfide-linked. As to expression, expressed strongly in trachea, lung, stomach, colon, prostate and small intestine. Expressed weakly in pituitary gland, salivary gland, mammary gland, bladder, appendix, ovary, fetal lung, uterus, pancreas, kidney, fetal kidney, testis, placenta, thyroid gland and in estrogen receptor (ER)-positive breast cancer cell lines.

It is found in the secreted. Its subcellular location is the endoplasmic reticulum. Its function is as follows. Required for MUC2 post-transcriptional synthesis and secretion. May play a role in the production of mucus by intestinal cells. Proto-oncogene that may play a role in cell migration, cell differentiation and cell growth. Promotes cell adhesion. This chain is Anterior gradient protein 2 homolog (AGR2), found in Homo sapiens (Human).